Reading from the N-terminus, the 217-residue chain is Adenylate kinase (217 aa).

10–15 contacts ATP; it reads GAGKGT. The tract at residues 30-59 is NMP; sequence STGDIFRKNVADDTPLGRLAKQYMDAGDLV. Residues Thr-31, Arg-36, 57–59, 85–88, and Gln-92 contribute to the AMP site; these read DLV and GFPR. Residues 126–163 are LID; the sequence is GRRTCADCAHVWHVTYDPPTVDGVCDLCGGKLFQREDD. Arg-127 serves as a coordination point for ATP. Zn(2+) contacts are provided by Cys-130, Cys-133, Cys-150, and Cys-153. Positions 160 and 171 each coordinate AMP. ATP is bound at residue Gly-199.

This sequence belongs to the adenylate kinase family. In terms of assembly, monomer.

The protein localises to the cytoplasm. The catalysed reaction is AMP + ATP = 2 ADP. It functions in the pathway purine metabolism; AMP biosynthesis via salvage pathway; AMP from ADP: step 1/1. Its function is as follows. Catalyzes the reversible transfer of the terminal phosphate group between ATP and AMP. Plays an important role in cellular energy homeostasis and in adenine nucleotide metabolism. The chain is Adenylate kinase from Acidothermus cellulolyticus (strain ATCC 43068 / DSM 8971 / 11B).